A 145-amino-acid polypeptide reads, in one-letter code: Ribonuclease HI (145 aa).

The 142-residue stretch at 1 to 142 (MNQTVYLYTD…ADDLANRGAA (142 aa)) folds into the RNase H type-1 domain. 4 residues coordinate Mg(2+): Asp10, Glu48, Asp70, and Asp134.

The protein belongs to the RNase H family. In terms of assembly, monomer. Requires Mg(2+) as cofactor.

It is found in the cytoplasm. The enzyme catalyses Endonucleolytic cleavage to 5'-phosphomonoester.. Its function is as follows. Endonuclease that specifically degrades the RNA of RNA-DNA hybrids. This chain is Ribonuclease HI, found in Neisseria meningitidis serogroup B (strain ATCC BAA-335 / MC58).